The chain runs to 97 residues: Protein YcgL (97 aa).

The 85-residue stretch at 1–85 (MLCVIYRSSK…PPEDLLKQHL (85 aa)) folds into the YcgL domain.

The protein is Protein YcgL of Escherichia fergusonii (strain ATCC 35469 / DSM 13698 / CCUG 18766 / IAM 14443 / JCM 21226 / LMG 7866 / NBRC 102419 / NCTC 12128 / CDC 0568-73).